The following is a 141-amino-acid chain: Large-conductance mechanosensitive channel (141 aa).

2 helical membrane passes run 16-36 (VVDL…VSSM) and 83-103 (GNFI…FLMV).

Belongs to the MscL family. Homopentamer.

It localises to the cell inner membrane. Its function is as follows. Channel that opens in response to stretch forces in the membrane lipid bilayer. May participate in the regulation of osmotic pressure changes within the cell. The sequence is that of Large-conductance mechanosensitive channel from Cytophaga hutchinsonii (strain ATCC 33406 / DSM 1761 / CIP 103989 / NBRC 15051 / NCIMB 9469 / D465).